A 446-amino-acid polypeptide reads, in one-letter code: Na(+)-translocating NADH-quinone reductase subunit A (446 aa).

Belongs to the NqrA family. In terms of assembly, composed of six subunits; NqrA, NqrB, NqrC, NqrD, NqrE and NqrF.

It catalyses the reaction a ubiquinone + n Na(+)(in) + NADH + H(+) = a ubiquinol + n Na(+)(out) + NAD(+). Its function is as follows. NQR complex catalyzes the reduction of ubiquinone-1 to ubiquinol by two successive reactions, coupled with the transport of Na(+) ions from the cytoplasm to the periplasm. NqrA to NqrE are probably involved in the second step, the conversion of ubisemiquinone to ubiquinol. The chain is Na(+)-translocating NADH-quinone reductase subunit A from Aliivibrio salmonicida (strain LFI1238) (Vibrio salmonicida (strain LFI1238)).